Here is a 641-residue protein sequence, read N- to C-terminus: Pre-mRNA-processing factor 39 (641 aa).

The segment at 1–50 (MEKSPEHCAEGSPSPATESAPSATEPPLPSTEPPLPSTEPPLPSTEPPLP) is disordered. Residues 10–23 (EGSPSPATESAPSA) show a composition bias toward low complexity. The segment covering 24-50 (TEPPLPSTEPPLPSTEPPLPSTEPPLP) has biased composition (pro residues). HAT repeat units lie at residues 50 to 82 (PPLP…YVEQ), 84 to 116 (NHLF…LEKK), 118 to 150 (NNIL…FLKE), 158 to 193 (ETSL…WETE), 304 to 336 (NFEE…FELE), 338 to 370 (GSNE…YMEN), and 372 to 407 (SVEG…QQGN).

This sequence belongs to the PRP39 family.

It localises to the nucleus. Involved in pre-mRNA splicing. The chain is Pre-mRNA-processing factor 39 (prpf39) from Xenopus laevis (African clawed frog).